An 81-amino-acid chain; its full sequence is Anaphase-promoting complex subunit emb-1 (81 aa).

In terms of assembly, the APC/C is probably composed of at least 12 subunits: apc-2, apc-10, apc-11, cdc-26, emb-1, emb-27, emb-30, mat-1, mat-2, mat-3, such-1 and gfi-3. Expressed in germ cells.

It participates in protein modification; protein ubiquitination. In terms of biological role, probable component of the anaphase promoting complex/cyclosome (APC/C), a cell cycle-regulated E3 ubiquitin ligase that controls progression through mitosis and the G1 phase of the cell cycle. The APC/C complex acts by mediating ubiquitination and subsequent degradation of target proteins. Developmental role in early embryogenesis and the metaphase to anaphase transition in meiosis and mitosis. May be required for germline proliferation. Required for male tail development and hermaphrodite vulva formation. This is Anaphase-promoting complex subunit emb-1 from Caenorhabditis elegans.